The following is a 338-amino-acid chain: Lipoate-protein ligase A (338 aa).

The BPL/LPL catalytic domain maps to 29-216 (PATQRVLFLW…AFFAHYGERV (188 aa)). ATP-binding positions include Arg-71, 76-79 (GAVF), and Lys-134. Lys-134 contributes to the (R)-lipoate binding site.

Belongs to the LplA family. Monomer.

It is found in the cytoplasm. It carries out the reaction L-lysyl-[lipoyl-carrier protein] + (R)-lipoate + ATP = N(6)-[(R)-lipoyl]-L-lysyl-[lipoyl-carrier protein] + AMP + diphosphate + H(+). Its pathway is protein modification; protein lipoylation via exogenous pathway; protein N(6)-(lipoyl)lysine from lipoate: step 1/2. The protein operates within protein modification; protein lipoylation via exogenous pathway; protein N(6)-(lipoyl)lysine from lipoate: step 2/2. Its function is as follows. Catalyzes both the ATP-dependent activation of exogenously supplied lipoate to lipoyl-AMP and the transfer of the activated lipoyl onto the lipoyl domains of lipoate-dependent enzymes. This is Lipoate-protein ligase A from Escherichia fergusonii (strain ATCC 35469 / DSM 13698 / CCUG 18766 / IAM 14443 / JCM 21226 / LMG 7866 / NBRC 102419 / NCTC 12128 / CDC 0568-73).